Here is a 76-residue protein sequence, read N- to C-terminus: uncharacterized protein (76 aa).

The helical transmembrane segment at 18–38 threads the bilayer; that stretch reads FISALFFFNAVCIVSDNLLII.

It localises to the cell membrane. This is an uncharacterized protein from Escherichia coli O6:H1 (strain CFT073 / ATCC 700928 / UPEC).